A 150-amino-acid chain; its full sequence is 3-hydroxyacyl-[acyl-carrier-protein] dehydratase FabZ (150 aa).

The active site involves histidine 52.

This sequence belongs to the thioester dehydratase family. FabZ subfamily.

The protein resides in the cytoplasm. The enzyme catalyses a (3R)-hydroxyacyl-[ACP] = a (2E)-enoyl-[ACP] + H2O. Functionally, involved in unsaturated fatty acids biosynthesis. Catalyzes the dehydration of short chain beta-hydroxyacyl-ACPs and long chain saturated and unsaturated beta-hydroxyacyl-ACPs. This chain is 3-hydroxyacyl-[acyl-carrier-protein] dehydratase FabZ, found in Variovorax paradoxus (strain S110).